We begin with the raw amino-acid sequence, 137 residues long: Large ribosomal subunit protein uL16 (137 aa).

The protein belongs to the universal ribosomal protein uL16 family. As to quaternary structure, part of the 50S ribosomal subunit.

Functionally, binds 23S rRNA and is also seen to make contacts with the A and possibly P site tRNAs. This is Large ribosomal subunit protein uL16 from Streptococcus pyogenes serotype M1.